The chain runs to 258 residues: Proteasome subunit alpha (258 aa).

Belongs to the peptidase T1A family. As to quaternary structure, the 20S proteasome core is composed of 14 alpha and 14 beta subunits that assemble into four stacked heptameric rings, resulting in a barrel-shaped structure. The two inner rings, each composed of seven catalytic beta subunits, are sandwiched by two outer rings, each composed of seven alpha subunits. The catalytic chamber with the active sites is on the inside of the barrel. Has a gated structure, the ends of the cylinder being occluded by the N-termini of the alpha-subunits. Is capped at one or both ends by the proteasome regulatory ATPase, PAN.

The protein localises to the cytoplasm. With respect to regulation, the formation of the proteasomal ATPase PAN-20S proteasome complex, via the docking of the C-termini of PAN into the intersubunit pockets in the alpha-rings, triggers opening of the gate for substrate entry. Interconversion between the open-gate and close-gate conformations leads to a dynamic regulation of the 20S proteasome proteolysis activity. Component of the proteasome core, a large protease complex with broad specificity involved in protein degradation. This chain is Proteasome subunit alpha, found in Aeropyrum pernix (strain ATCC 700893 / DSM 11879 / JCM 9820 / NBRC 100138 / K1).